The chain runs to 130 residues: Small ribosomal subunit protein uS9 (130 aa).

It belongs to the universal ribosomal protein uS9 family.

This chain is Small ribosomal subunit protein uS9, found in Buchnera aphidicola subsp. Baizongia pistaciae (strain Bp).